The primary structure comprises 756 residues: MTSIIKLHTISGAMDESPPCYILQIDDVRILLDCGWDEKFDANFIKELKRQVHTLDAVLLSHPDAYHLGALPYLVGKLGLNCPIYATIPVFKMGQMFMYDLYMSHFNMGDFDLFSLDDVDTAFEKITQLKYNQTVSLKDKGYGISITPLNAGHMIGGTIWKIVKVGEEDIVYATDFNHKKERHLSGCELDRLQRPSLLITDAYNAQYQQARRRARDEKLMTNILQTVRNNGNVLIAVDTAGRVLELAHMLDQLWKNKESGLMAYSLALLNNVSYNVIEFAKSQIEWMSDKLTKAFEGARNNPFQFKHIQLCHSLADVYKLPAGPKVVLASTPDLESGFTRDLFVQWASNANNSIILTTRTSPGTLAMELVENCAPGKQIELDVRRRVDLEGAELEEYLRTQGEKLNPLIVKPDVEEESSSESEDDIEMSVITGKHDIVVRPEGRHHSGFFKSNKRHHVMFPYHEEKVKCDEYGEIINLDDYRIADATGYEFVPMEEQNKENVKKEEPGIGAEQQANGGIVDNDVQLLEKPTKLISQRKTIEVNAQVQRIDFEGRSDGESMLKILSQLRPRRVIVIHGTAEGTQVVARHCEQNVGARVFTPQKGEIIDVTSEIHIYQVRLTEGLVSQLQFQKGKDAEVAWVDGRLGMRVKAIEAPMDVTVEQDASVQEGKTLTLETLADDEIPIHNSVLINELKLSDFKQTLMRNNINSEFSGGVLWCSNGTLALRRVDAGKVAMEGCLSEEYYKIRELLYEQYAIV.

Residues threonine 221 and threonine 226 each carry the phosphothreonine modification.

This sequence belongs to the metallo-beta-lactamase superfamily. RNA-metabolizing metallo-beta-lactamase-like family. CPSF2/YSH1 subfamily. As to quaternary structure, component of the cleavage and polyadenylation specificity factor (CPSF) complex, composed of at least Clp, Cpsf73, Cpsf100 and Cpsf160. Interacts with Sym and Cpsf73 forming a core cleavage factor required for both polyadenylated and histone mRNA processing. Interacts with Slbp and Lsm11.

It localises to the nucleus. In terms of biological role, component of the cleavage and polyadenylation specificity factor (CPSF) complex that plays a key role in pre-mRNA 3'-end formation, recognizing the AAUAAA signal sequence and interacting with poly(A) polymerase and other factors to bring about cleavage and poly(A) addition. Required for the cotranscriptional processing of 3'-ends of polyadenylated and histone pre-mRNA. This is Probable cleavage and polyadenylation specificity factor subunit 2 (Cpsf100) from Drosophila melanogaster (Fruit fly).